A 267-amino-acid polypeptide reads, in one-letter code: Strigolactone esterase D14 (267 aa).

Ser97 functions as the Nucleophile in the catalytic mechanism. Catalysis depends on residues Asp218 and His247.

It belongs to the AB hydrolase superfamily. Interacts with SMXL6, SMXL7 and SMXL8. The interaction with SMXLs occurs in the presence of (2'R) stereoisomers of strigolactones, but not (2'S) stereoisomers. Interacts with MAX2. Forms a complex with MAX2 and SKP1A/ASK1 in presence of strigolactone. In terms of tissue distribution, expressed at high levels in rosette and cauline leaves and at lower levels in axillary buds, inflorescences, stems, roots and developing vascular tissue of cotyledons.

The protein localises to the cytoplasm. Its subcellular location is the nucleus. Functionally, involved in strigolactone signaling pathway. Does not move long distances acropetally in the plant to regulate shoot branching and is rapidly degraded in the presence of strigolactones. Functions downstream of strigolactone synthesis, as a component of hormone signaling and as an enzyme that participates in the conversion of strigolactones to the bioactive form. Acts probably as a strigolactone receptor. Strigolactones are hormones that inhibit tillering and shoot branching through the MAX-dependent pathway, contribute to the regulation of shoot architectural response to phosphate-limiting conditions and function as rhizosphere signal that stimulates hyphal branching of arbuscular mycorrhizal fungi and trigger seed germination of root parasitic weeds. Hydrolyzes methyl carlactonoate (MeCLA), but not carlactone (CL) or carlactonoic acid (CLA). Hydrolyzes the butenolide ring of strigolactones. The initial nucleophilic attack causes an electron shift, followed by the addition of a water molecule, to lead to the release of the ABC ring product and the formation of a 'Ser-97'-stabilized open lactone intermediate. Has no esterase activity for 4-nitrophenyl butyrate. Binds and hydrolyzes the synthetic strigolactone analog GR24 in vitro. Forms a stable covalent complex with the D-ring of strigolactone, which is essential for hormone bioactivity. The D-ring is attached to His-247 of the catalytic triad. The hydrolysis of strigolactone into a covalently linked intermediate molecule initiates a conformational change of D14 to facilitate interaction with MAX2 and formation of the D14-MAX2-SKP1/ASK1 complex to trigger strigolactone signaling. This mechanism defines D14 as a non-canonical hormone receptor with dual functions to generate and sense the active form of strigolactone. The protein is Strigolactone esterase D14 of Arabidopsis thaliana (Mouse-ear cress).